The chain runs to 553 residues: Phenylalanine--tRNA ligase alpha subunit (553 aa).

2 residues coordinate L-phenylalanine: Thr-400 and Phe-479. Glu-481 serves as a coordination point for Mg(2+).

This sequence belongs to the class-II aminoacyl-tRNA synthetase family. Phe-tRNA synthetase alpha subunit type 2 subfamily. As to quaternary structure, tetramer of two alpha and two beta subunits. Mg(2+) is required as a cofactor.

The protein resides in the cytoplasm. It catalyses the reaction tRNA(Phe) + L-phenylalanine + ATP = L-phenylalanyl-tRNA(Phe) + AMP + diphosphate + H(+). The chain is Phenylalanine--tRNA ligase alpha subunit from Treponema pallidum (strain Nichols).